Here is a 596-residue protein sequence, read N- to C-terminus: Elongation factor 4 (596 aa).

The 183-residue stretch at 2–184 (KHIRNFSIIA…EIIAKIPPPV (183 aa)) folds into the tr-type G domain. GTP contacts are provided by residues 14–19 (DHGKST) and 131–134 (NKID).

It belongs to the TRAFAC class translation factor GTPase superfamily. Classic translation factor GTPase family. LepA subfamily.

Its subcellular location is the cell inner membrane. It catalyses the reaction GTP + H2O = GDP + phosphate + H(+). Functionally, required for accurate and efficient protein synthesis under certain stress conditions. May act as a fidelity factor of the translation reaction, by catalyzing a one-codon backward translocation of tRNAs on improperly translocated ribosomes. Back-translocation proceeds from a post-translocation (POST) complex to a pre-translocation (PRE) complex, thus giving elongation factor G a second chance to translocate the tRNAs correctly. Binds to ribosomes in a GTP-dependent manner. The polypeptide is Elongation factor 4 (Shewanella frigidimarina (strain NCIMB 400)).